Reading from the N-terminus, the 474-residue chain is MLSVPDYEFWFVTGSQHLYGEEQLKSVAKDAQDIADKLNASGKLPYKVVFKDVMTTAESITNFMKEVNYNDNVAGVITWMHTFSPAKNWIRGTELLQKPLLHLATQYLNNIPYADIDFDYMNLNQSAHGDREYAYINARLNVNNKIVYGYWGDEDVQDQIARWEDVAVAYNESFKVKVARFGDTMRNVAVTEGDKVEAQIKMGWTVDYYGIGDLVEEINKVSDADVDKEYADLESKYTMVQGDNDAETYKHSVRVQLQQYLGIKRFLEKGGYTAFTTNFEDLWGMEQLPGLAAQLLIRDGYGFGAEGDWKTAALGRVMKIMSHNDRTAFMEDYTLDLRKGHEAILGSHMLEVDPTIASDKPRVEVHPLDIGGKADPARLVFTGSEGDAIDVTVADFRDGFKMIGYAVDANKPEGETPNLPVAKQLWTPKVGLKTGALEWMKAGGGHHTMLSFSLTEEQMEDFATMVGMTKAFIK.

The Mn(2+) site is built by Glu306, Glu331, His348, and His447.

It belongs to the arabinose isomerase family. The cofactor is Mn(2+).

The catalysed reaction is beta-L-arabinopyranose = L-ribulose. It functions in the pathway carbohydrate degradation; L-arabinose degradation via L-ribulose; D-xylulose 5-phosphate from L-arabinose (bacterial route): step 1/3. Catalyzes the conversion of L-arabinose to L-ribulose. This is L-arabinose isomerase from Levilactobacillus brevis (strain ATCC 367 / BCRC 12310 / CIP 105137 / JCM 1170 / LMG 11437 / NCIMB 947 / NCTC 947) (Lactobacillus brevis).